Reading from the N-terminus, the 398-residue chain is O-methyltransferase penC (398 aa).

Residue Asp-263 participates in S-adenosyl-L-methionine binding. His-305 serves as the catalytic Proton acceptor.

The protein belongs to the class I-like SAM-binding methyltransferase superfamily. Cation-independent O-methyltransferase family.

It functions in the pathway secondary metabolite biosynthesis. The protein operates within alkaloid biosynthesis. It participates in mycotoxin biosynthesis. Its function is as follows. O-methyltransferase; part of the gene cluster that mediates the biosynthesis of penigequinolones, potent insecticidal alkaloids that contain a highly modified 10-carbon prenyl group. The first stage is catalyzed by the nonribosomal peptide synthetase penN that condenses anthranilic acid and O-methyl-L-tyrosine to produce 4'-methoxycyclopeptin. 4'-methoxycyclopeptin is then converted to 4'-methoxydehydrocyclopeptin by the ketoglutarate-dependent dioxygenase penM through dehydrogenation to form a double bond between C-alpha and C-beta of the O-methyltyrosine side chain. PenM also converts its first product methoxydehydrocyclopeptin to 4'-methoxycyclopenin. The following conversion of 4'methoxycyclopenin into 4'-methoxyviridicatin is catalyzed by the cyclopenase penL. 4'-methoxyviridicatin is the precursor of quinolone natural products, and is further converted to quinolinone B. The prenyltransferase penI then catalyzes the canonical Friedel-Crafts alkylation of quinolinone B with dimethylallyl cation to yield dimethylallyl quinolone, which is subjected to FAD-dependent dehydrogenation by the FAD-linked oxidoreductase penH to yield conjugated aryl diene. The delta(3') double bond then serves as the site of the second alkylation with DMAPP catalyzed by the prenyltransferase penG to yield a carbenium ion intermediate, which can be attacked by H(2)O to yield a styrenyl quinolone containing a C3'-hydroxyprenyl chain, or undergo cyclization to yield yaequinolones J1 and J2. The conversion of the styrenyl quinolone into the tetrahydrofuran-containing yaequinolone C is performed by the FAD-dependent monooxygenase penE and involves epoxidation of the terminal C7'-C8' olefin, followed by epoxide ring opening initiated by the C3' hydroxyl group. The predicted cysteine hydrolase penJ acts as an epoxide hydrolase that enhances the rate of the 5-exo-tet cyclization step, increasing the yield of yaequinolone C. PenF catalyzes the cationic rearrangement of the epoxide formed by penE (before ring opening to produce yaequinolone C) into yaequinolone D. Finally, the short-chain dehydrogenase/reductase (SDR)-like reductase penD, catalyzes both the dehydration of yaequinolone D and the reduction of the resulting oxonium to yield penigequinolone. The polypeptide is O-methyltransferase penC (Penicillium thymicola).